The following is a 438-amino-acid chain: 23S rRNA (uracil(1939)-C(5))-methyltransferase RlmD (438 aa).

A TRAM domain is found at Lys-8–Lys-68. [4Fe-4S] cluster-binding residues include Cys-81, Cys-87, Cys-90, and Cys-168. Residues Gln-271, Phe-300, Asn-305, Glu-321, Asp-348, and Asp-369 each coordinate S-adenosyl-L-methionine. Catalysis depends on Cys-395, which acts as the Nucleophile.

The protein belongs to the class I-like SAM-binding methyltransferase superfamily. RNA M5U methyltransferase family. RlmD subfamily.

It carries out the reaction uridine(1939) in 23S rRNA + S-adenosyl-L-methionine = 5-methyluridine(1939) in 23S rRNA + S-adenosyl-L-homocysteine + H(+). Its function is as follows. Catalyzes the formation of 5-methyl-uridine at position 1939 (m5U1939) in 23S rRNA. The chain is 23S rRNA (uracil(1939)-C(5))-methyltransferase RlmD from Haemophilus influenzae (strain 86-028NP).